Consider the following 139-residue polypeptide: Nucleoside diphosphate kinase (139 aa).

ATP contacts are provided by K11, F59, R87, T93, R104, and N114. The active-site Pros-phosphohistidine intermediate is H117.

It belongs to the NDK family. As to quaternary structure, homotetramer. The cofactor is Mg(2+).

Its subcellular location is the cytoplasm. It catalyses the reaction a 2'-deoxyribonucleoside 5'-diphosphate + ATP = a 2'-deoxyribonucleoside 5'-triphosphate + ADP. It carries out the reaction a ribonucleoside 5'-diphosphate + ATP = a ribonucleoside 5'-triphosphate + ADP. In terms of biological role, major role in the synthesis of nucleoside triphosphates other than ATP. The ATP gamma phosphate is transferred to the NDP beta phosphate via a ping-pong mechanism, using a phosphorylated active-site intermediate. The protein is Nucleoside diphosphate kinase of Wolbachia pipientis subsp. Culex pipiens (strain wPip).